The primary structure comprises 339 residues: UDP-N-acetylglucosamine--N-acetylmuramyl-(pentapeptide) pyrophosphoryl-undecaprenol N-acetylglucosamine transferase (339 aa).

Residues 11 to 13, Asn127, Arg170, Ser188, Ile235, and Gln280 each bind UDP-N-acetyl-alpha-D-glucosamine; that span reads TGG.

Belongs to the glycosyltransferase 28 family. MurG subfamily.

Its subcellular location is the cell inner membrane. The enzyme catalyses di-trans,octa-cis-undecaprenyl diphospho-N-acetyl-alpha-D-muramoyl-L-alanyl-D-glutamyl-meso-2,6-diaminopimeloyl-D-alanyl-D-alanine + UDP-N-acetyl-alpha-D-glucosamine = di-trans,octa-cis-undecaprenyl diphospho-[N-acetyl-alpha-D-glucosaminyl-(1-&gt;4)]-N-acetyl-alpha-D-muramoyl-L-alanyl-D-glutamyl-meso-2,6-diaminopimeloyl-D-alanyl-D-alanine + UDP + H(+). The protein operates within cell wall biogenesis; peptidoglycan biosynthesis. Its function is as follows. Cell wall formation. Catalyzes the transfer of a GlcNAc subunit on undecaprenyl-pyrophosphoryl-MurNAc-pentapeptide (lipid intermediate I) to form undecaprenyl-pyrophosphoryl-MurNAc-(pentapeptide)GlcNAc (lipid intermediate II). The chain is UDP-N-acetylglucosamine--N-acetylmuramyl-(pentapeptide) pyrophosphoryl-undecaprenol N-acetylglucosamine transferase from Thermotoga neapolitana (strain ATCC 49049 / DSM 4359 / NBRC 107923 / NS-E).